A 652-amino-acid polypeptide reads, in one-letter code: 1,4-alpha-glucan branching enzyme GlgB (652 aa).

The active-site Nucleophile is D322. The Proton donor role is filled by E373.

It belongs to the glycosyl hydrolase 13 family. GlgB subfamily. In terms of assembly, monomer.

It carries out the reaction Transfers a segment of a (1-&gt;4)-alpha-D-glucan chain to a primary hydroxy group in a similar glucan chain.. It functions in the pathway glycan biosynthesis; glycogen biosynthesis. Its function is as follows. Catalyzes the formation of the alpha-1,6-glucosidic linkages in glycogen by scission of a 1,4-alpha-linked oligosaccharide from growing alpha-1,4-glucan chains and the subsequent attachment of the oligosaccharide to the alpha-1,6 position. This Deinococcus geothermalis (strain DSM 11300 / CIP 105573 / AG-3a) protein is 1,4-alpha-glucan branching enzyme GlgB.